Here is a 405-residue protein sequence, read N- to C-terminus: uncharacterized protein (405 aa).

A run of 13 helical transmembrane segments spans residues 19–39 (IVSI…PLAV), 48–68 (MGFS…ATLL), 85–105 (IVVF…LADI), 106–126 (ASAW…ILGI), 129–149 (SFAG…LHIG), 156–176 (GIVT…CYAW), 178–198 (GLQG…LLAL), 224–244 (GMAL…ITLF), 252–272 (GAAF…LLFP), 283–303 (VAMI…TAAM), 309–329 (IGVL…GVVA), 344–364 (TYTV…GLVM), and 366–386 (WAGV…ALLL).

The protein belongs to the major facilitator superfamily. YhhS family.

It localises to the cell inner membrane. This is an uncharacterized protein from Salmonella enteritidis PT4 (strain P125109).